Here is a 316-residue protein sequence, read N- to C-terminus: Beta-ketoacyl-[acyl-carrier-protein] synthase III 1 (316 aa).

Active-site residues include C112 and H243. The tract at residues 244–248 (QANYR) is ACP-binding. N273 is an active-site residue.

It belongs to the thiolase-like superfamily. FabH family. As to quaternary structure, homodimer.

The protein localises to the cytoplasm. It catalyses the reaction malonyl-[ACP] + acetyl-CoA + H(+) = 3-oxobutanoyl-[ACP] + CO2 + CoA. It participates in lipid metabolism; fatty acid biosynthesis. Its function is as follows. Catalyzes the condensation reaction of fatty acid synthesis by the addition to an acyl acceptor of two carbons from malonyl-ACP. Catalyzes the first condensation reaction which initiates fatty acid synthesis and may therefore play a role in governing the total rate of fatty acid production. Possesses both acetoacetyl-ACP synthase and acetyl transacylase activities. Its substrate specificity determines the biosynthesis of branched-chain and/or straight-chain of fatty acids. The polypeptide is Beta-ketoacyl-[acyl-carrier-protein] synthase III 1 (Vibrio parahaemolyticus serotype O3:K6 (strain RIMD 2210633)).